The following is a 398-amino-acid chain: Nonsense-mediated decay protein 4 (398 aa).

Residues proline 327 to arginine 355 are disordered. Over residues lysine 335–arginine 350 the composition is skewed to basic residues.

It localises to the cytoplasm. Involved in nonsense-mediated decay of mRNAs containing premature stop codons. The chain is Nonsense-mediated decay protein 4 (NMD4) from Candida albicans (strain SC5314 / ATCC MYA-2876) (Yeast).